Consider the following 77-residue polypeptide: MARVCKVTGKRPMVGNNVSHANNKTKRRFLPNLQYRRFWVESENRWVRMRVSNAALRTIDKVGIDAVLADLRARGEI.

This sequence belongs to the bacterial ribosomal protein bL28 family.

This is Large ribosomal subunit protein bL28 from Laribacter hongkongensis (strain HLHK9).